An 84-amino-acid chain; its full sequence is Figainin 2 (84 aa).

The first 22 residues, 1–22 (MAFLKKSLFLVLFLGIVSLSVC), serve as a signal peptide directing secretion. Positions 23 to 39 (EEEKREGEEKEEKREEE) are enriched in basic and acidic residues. The tract at residues 23–53 (EEEKREGEEKEEKREEEEGKEENEDGNEEHK) is disordered. The propeptide occupies 23-54 (EEEKREGEEKEEKREEEEGKEENEDGNEEHKE). Positions 40 to 49 (EGKEENEDGN) are enriched in acidic residues.

In terms of tissue distribution, expressed by the skin glands.

It localises to the secreted. Antimicrobial peptide that displays antibacterial, antiprotozoal, and antiviral activity. Exhibits antibacterial activity against the Gram-positive bacteria S.epidermidis ATCC 12228 (MIC=4 uM), E.casseliflavus ATCC 700327 (MIC=4 uM), S.aureus ATCC 25923 (MIC=8 uM) and E.faecalis ATCC 29212 (MIC=8 uM), and the Gram-negative bacteria E.coli ATCC 25922 (MIC=8 uM), K.pneumoniae ATCC 13883 (MIC=8 uM), the multi-resistant clinical isolate strain K.pneumoniae carbapanemase (KPC) MR (MIC=16 uM), and P.aeruginosa ATCC 27853 (MIC=32 uM). Displays antiprotozoal activity against the epimastigote form of T.cruzi (IC(50)=6.32 uM). Does not show antimicrobial against the fungi C.albicans ATCC 90028 and C.parapsilosis ATCC 22019. Displays antiviral activity against the human viruses chikungunya (EC(50)=17.9 uM), Dengue serotype 4 (EC(50)=20.8 uM) and Yellow Fever (EC(50)=21.8 uM). Shows moderate cytolytic activity against human erythrocytes (HC(50)=48.9 uM), and activates the oxidative burst in human neutrophils. Also displays anti-proliferative effects against MCF-7 breast cancer cells (IC(50)=15.3 uM) and B16F10 murine melanoma cells (IC(50)=12.8 uM). This chain is Figainin 2, found in Boana raniceps (Chaco tree frog).